Reading from the N-terminus, the 44-residue chain is Conotoxin Rg11a (44 aa).

Disulfide bonds link Cys1–Cys15, Cys8–Cys22, Cys14–Cys30, and Cys21–Cys36.

In terms of tissue distribution, expressed by the venom duct.

It is found in the secreted. Functionally, neurotoxin. Elicits hypersensibility when injected intracranially in mice. May act via potassium channel currents. This chain is Conotoxin Rg11a, found in Conus regius (Crown cone).